The sequence spans 176 residues: Peptide methionine sulfoxide reductase MsrA (176 aa).

Cys-10 is a catalytic residue.

It belongs to the MsrA Met sulfoxide reductase family.

It carries out the reaction L-methionyl-[protein] + [thioredoxin]-disulfide + H2O = L-methionyl-(S)-S-oxide-[protein] + [thioredoxin]-dithiol. The enzyme catalyses [thioredoxin]-disulfide + L-methionine + H2O = L-methionine (S)-S-oxide + [thioredoxin]-dithiol. Has an important function as a repair enzyme for proteins that have been inactivated by oxidation. Catalyzes the reversible oxidation-reduction of methionine sulfoxide in proteins to methionine. This Leptospira borgpetersenii serovar Hardjo-bovis (strain L550) protein is Peptide methionine sulfoxide reductase MsrA.